The chain runs to 84 residues: Small ribosomal subunit protein uS17 (84 aa).

This sequence belongs to the universal ribosomal protein uS17 family. In terms of assembly, part of the 30S ribosomal subunit.

One of the primary rRNA binding proteins, it binds specifically to the 5'-end of 16S ribosomal RNA. The chain is Small ribosomal subunit protein uS17 from Treponema pallidum (strain Nichols).